Here is an 86-residue protein sequence, read N- to C-terminus: Large ribosomal subunit protein bL27 (86 aa).

The disordered stretch occupies residues 1-24; sequence MAHKKGTGSTRNGRDSNSKRLGVK.

It belongs to the bacterial ribosomal protein bL27 family.

The protein is Large ribosomal subunit protein bL27 of Prochlorococcus marinus (strain MIT 9312).